The following is a 739-amino-acid chain: ABC transporter G family member 20 (739 aa).

In terms of domain architecture, ABC transporter spans 88-351 (LSFKDLTYSV…FSEFGHPIPE (264 aa)). 144-151 (GASGSGKS) lines the ATP pocket. In terms of domain architecture, ABC transmembrane type-2 spans 433–643 (TEMLVIGKRS…PYEGVLQNEF (211 aa)). A run of 6 helical transmembrane segments spans residues 452 to 472 (LFGI…TIFW), 487 to 507 (FFAF…PVFL), 528 to 548 (VLAH…AFAA), 563 to 583 (FLFF…FVTF), 593 to 613 (IGFT…GFFI), and 712 to 732 (LWIT…TLLI).

The protein belongs to the ABC transporter superfamily. ABCG family. Eye pigment precursor importer (TC 3.A.1.204) subfamily.

The protein localises to the membrane. This chain is ABC transporter G family member 20 (ABCG20), found in Arabidopsis thaliana (Mouse-ear cress).